An 80-amino-acid chain; its full sequence is Dermaseptin-A5 (80 aa).

The signal sequence occupies residues 1–22 (MAFLKKSLFLVLFLGLVSLSIC). Residues 23–43 (EEEKRENEDEEEQEDDEQSEM) constitute a propeptide that is removed on maturation. Residues 24–45 (EEKRENEDEEEQEDDEQSEMKR) are disordered. Positions 30-40 (EDEEEQEDDEQ) are enriched in acidic residues. A Valine amide modification is found at Val-77. The propeptide occupies 79-80 (EQ).

It belongs to the frog skin active peptide (FSAP) family. Dermaseptin subfamily. Expressed by the skin glands.

It localises to the secreted. Its function is as follows. Possesses a potent antimicrobial activity against Gram-positive and Gram-negative bacteria. Probably acts by disturbing membrane functions with its amphipathic structure. In Agalychnis annae (Blue-sided leaf frog), this protein is Dermaseptin-A5.